The chain runs to 383 residues: L-Ala-D/L-Glu epimerase (383 aa).

Residues R68, Y94, and 198-200 (KVK) contribute to the substrate site. The Mg(2+) site is built by D224, E251, and D276. Substrate contacts are provided by residues K298, 326 to 328 (CMT), and 348 to 350 (DLD).

It belongs to the mandelate racemase/muconate lactonizing enzyme family. Requires Mg(2+) as cofactor.

It carries out the reaction L-alanyl-L-glutamate = L-alanyl-D-glutamate. Its function is as follows. Catalyzes the epimerization of L-Ala-D-Glu to L-Ala-L-Glu and may play a role in the metabolism of the murein peptide, of which L-Ala-D-Glu is a component. Is also able to catalyze the epimerization of L-Ala-D-Asp, L-Ala-L-Glu, L-Ala-L-Ser, L-Ala-L-Pro, L-Ala-L-L-Val, L-Ala-L-Thr, L-Ala-L-Leu, L-Ala-L-Ile and L-Gly-L-Glu (in vitro). The sequence is that of L-Ala-D/L-Glu epimerase from Bacteroides thetaiotaomicron (strain ATCC 29148 / DSM 2079 / JCM 5827 / CCUG 10774 / NCTC 10582 / VPI-5482 / E50).